The following is a 455-amino-acid chain: Ribosomal protein uS12 methylthiotransferase RimO (455 aa).

Residues 10-120 (PKVGMVSLGC…VVEAVHDAAP (111 aa)) form the MTTase N-terminal domain. Cys-19, Cys-55, Cys-84, Cys-151, Cys-155, and Cys-158 together coordinate [4Fe-4S] cluster. In terms of domain architecture, Radical SAM core spans 137–380 (LTPRHYSYLK…MAKTAAISAA (244 aa)). A TRAM domain is found at 383–455 (EAKIGRTLPV…DEHDLFGVVT (73 aa)).

The protein belongs to the methylthiotransferase family. RimO subfamily. [4Fe-4S] cluster serves as cofactor.

It localises to the cytoplasm. The enzyme catalyses L-aspartate(89)-[ribosomal protein uS12]-hydrogen + (sulfur carrier)-SH + AH2 + 2 S-adenosyl-L-methionine = 3-methylsulfanyl-L-aspartate(89)-[ribosomal protein uS12]-hydrogen + (sulfur carrier)-H + 5'-deoxyadenosine + L-methionine + A + S-adenosyl-L-homocysteine + 2 H(+). Catalyzes the methylthiolation of an aspartic acid residue of ribosomal protein uS12. The polypeptide is Ribosomal protein uS12 methylthiotransferase RimO (Sphingopyxis alaskensis (strain DSM 13593 / LMG 18877 / RB2256) (Sphingomonas alaskensis)).